The chain runs to 159 residues: Nucleotide-binding protein Pmen_0939 (159 aa).

The protein belongs to the YajQ family.

Functionally, nucleotide-binding protein. The polypeptide is Nucleotide-binding protein Pmen_0939 (Ectopseudomonas mendocina (strain ymp) (Pseudomonas mendocina)).